We begin with the raw amino-acid sequence, 296 residues long: Sulfotransferase 1E1 (296 aa).

49–54 provides a ligand contact to 3'-phosphoadenylyl sulfate; sequence KSGTTW. 107-109 serves as a coordination point for substrate; that stretch reads KTH. Residue His109 is the Proton acceptor of the active site. 3'-phosphoadenylyl sulfate contacts are provided by residues Arg131, Ser139, Tyr194, 228–233, and 258–260; these read TSFQEM and RKG.

Belongs to the sulfotransferase 1 family. In terms of assembly, homodimer. The N-terminus is blocked. As to expression, adrenal gland and much less in liver. Detectable only during pregnancy in uterine.

It is found in the cytoplasm. The protein resides in the cytosol. The catalysed reaction is estrone + 3'-phosphoadenylyl sulfate = estrone 3-sulfate + adenosine 3',5'-bisphosphate + H(+). It catalyses the reaction (24S)-hydroxycholesterol + 3'-phosphoadenylyl sulfate = (24S)-hydroxycholesterol 3-sulfate + adenosine 3',5'-bisphosphate + H(+). It carries out the reaction 17beta-estradiol + 3'-phosphoadenylyl sulfate = 17beta-estradiol 3-sulfate + adenosine 3',5'-bisphosphate + H(+). The enzyme catalyses 3beta-hydroxyandrost-5-en-17-one + 3'-phosphoadenylyl sulfate = dehydroepiandrosterone 3-sulfate + adenosine 3',5'-bisphosphate + H(+). The catalysed reaction is 4-ethylphenol + 3'-phosphoadenylyl sulfate = 4-ethylphenyl sulfate + adenosine 3',5'-bisphosphate + H(+). Inhibited by estradiol. In terms of biological role, sulfotransferase that utilizes 3'-phospho-5'-adenylyl sulfate (PAPS) as sulfonate donor to catalyze the sulfate conjugation of estradiol and estrone. Is a key enzyme in estrogen homeostasis, the sulfation of estrogens leads to their inactivation. Also sulfates dehydroepiandrosterone (DHEA), pregnenolone, (24S)-hydroxycholesteroland xenobiotic compounds like ethinylestradiol, equalenin, diethyl stilbesterol and 1-naphthol at significantly lower efficiency. Does not sulfonate cortisol, testosterone and dopamine. May play a role in gut microbiota-host metabolic interaction. O-sulfonates 4-ethylphenol (4-EP), a dietary tyrosine-derived metabolite produced by gut bacteria. The product 4-EPS crosses the blood-brain barrier and may negatively regulate oligodendrocyte maturation and myelination, affecting the functional connectivity of different brain regions associated with the limbic system. This chain is Sulfotransferase 1E1 (SULT1E1), found in Cavia porcellus (Guinea pig).